A 523-amino-acid polypeptide reads, in one-letter code: Sugar carrier protein C (523 aa).

The Cytoplasmic segment spans residues 1 to 25; the sequence is MPAVGGIPPSGGNRKVYPGNLTLYV. 12 helical membrane passes run 26–46, 86–106, 120–140, 143–163, 172–192, 205–225, 298–320, 327–347, 351–371, 387–407, 433–453, and 456–476; these read TVTC…IGIS, MFTS…STIT, VLFC…MLIL, ILLG…LSEM, LNIG…VLNY, LSLG…LVLP, LTGI…FGSD, VITG…VDKW, FLFL…AACI, WYAV…AWSW, SVNM…LCHL, and GLFI…YYFL. Topologically, residues 477 to 523 are cytoplasmic; it reads PETKGIPIEEMGQVWKQHWYWSRYVVDEDYPNGGLEMGKEGRIPKNV.

The protein belongs to the major facilitator superfamily. Sugar transporter (TC 2.A.1.1) family.

The protein localises to the membrane. This Ricinus communis (Castor bean) protein is Sugar carrier protein C (STC).